Reading from the N-terminus, the 207-residue chain is Small ribosomal subunit protein uS4c (207 aa).

One can recognise an S4 RNA-binding domain in the interval 92-156 (MRLDNILFRL…YQSIITKRIE (65 aa)).

Belongs to the universal ribosomal protein uS4 family. In terms of assembly, part of the 30S ribosomal subunit. Contacts protein S5. The interaction surface between S4 and S5 is involved in control of translational fidelity.

It is found in the plastid. The protein localises to the chloroplast. In terms of biological role, one of the primary rRNA binding proteins, it binds directly to 16S rRNA where it nucleates assembly of the body of the 30S subunit. Functionally, with S5 and S12 plays an important role in translational accuracy. This Equisetum palustre (Marsh horsetail) protein is Small ribosomal subunit protein uS4c (rps4).